Consider the following 388-residue polypeptide: Na(+)/H(+) antiporter NhaA (388 aa).

A run of 11 helical transmembrane segments spans residues 14 to 34 (GGII…MGAT), 59 to 79 (MLLW…GLEV), 95 to 115 (AFPV…YLAF), 125 to 145 (GWAI…ALLG), 154 to 174 (IFLM…IALF), 179 to 199 (LSIV…LLNL), 219 to 239 (VLKS…FIPL), 254 to 274 (VLHP…NAGV), 292 to 312 (IIAG…WLAL), 328 to 348 (IMAV…IASL), and 360 to 380 (WAKL…YSWL).

Belongs to the NhaA Na(+)/H(+) (TC 2.A.33) antiporter family.

It is found in the cell inner membrane. It catalyses the reaction Na(+)(in) + 2 H(+)(out) = Na(+)(out) + 2 H(+)(in). Functionally, na(+)/H(+) antiporter that extrudes sodium in exchange for external protons. This Salmonella choleraesuis (strain SC-B67) protein is Na(+)/H(+) antiporter NhaA.